A 236-amino-acid chain; its full sequence is Ascorbate-specific transmembrane electron transporter 1 (236 aa).

Over 1–11 the chain is Cytoplasmic; the sequence is MGLGLGVRAAP. The helical transmembrane segment at 12 to 32 threads the bilayer; the sequence is FTYAAHALAVAAAAMVLVWSI. Residues 15-219 form the Cytochrome b561 domain; sequence AAHALAVAAA…FGASVVVAAI (205 aa). Residues 33-50 lie on the Extracellular side of the membrane; that stretch reads QFRGGLAIESTNKNLIFN. The helical transmembrane segment at 51–71 threads the bilayer; the sequence is VHPVLMLIGYVIIGGEAIMVY. Histidine 52 is a heme b binding site. Position 67–75 (67–75) interacts with L-ascorbate; that stretch reads AIMVYRVLP. The Cytoplasmic segment spans residues 72 to 84; sequence RVLPTSNHDTTKL. Residues 85–105 traverse the membrane as a helical segment; it reads IHLILHGIALVLGAVGIYFAF. Heme b-binding residues include histidine 86 and histidine 120. Residues 106-122 are Extracellular-facing; sequence KNHNESGIANLYSLHSW. 116–125 lines the monodehydro-L-ascorbate radical pocket; the sequence is LYSLHSWIGI. A helical transmembrane segment spans residues 123–143; it reads IGIGTITLYGIQWIIGFVTFF. The Cytoplasmic segment spans residues 144-153; that stretch reads FPGAAPNVKK. The chain crosses the membrane as a helical span at residues 154–174; sequence GVLPWHVLFGLFVYILALANA. Histidine 159 is a heme b binding site. Topologically, residues 175–201 are extracellular; that stretch reads ELGFLEKLTFLESSGLDKYGTEAFLVN. The helical transmembrane segment at 202-222 threads the bilayer; the sequence is FTALVVVLFGASVVVAAIAPV. The Cytoplasmic segment spans residues 223–236; the sequence is RLEEPQGYDPIPEN.

Heme b serves as cofactor.

The protein resides in the membrane. Its activity is regulated as follows. Inhibited by diethylpyrocarbonate. In terms of biological role, two-heme-containing cytochrome. Catalyzes ascorbate-dependent trans-membrane electron transfer by utilizing a concerted H(+)/e(-) transfer mechanism. In Zea mays (Maize), this protein is Ascorbate-specific transmembrane electron transporter 1 (ZCYB).